A 396-amino-acid polypeptide reads, in one-letter code: Elongation factor Tu (396 aa).

In terms of domain architecture, tr-type G spans 10 to 205; it reads KPHVNIGTIG…AVDESIPDPV (196 aa). Positions 19-26 are G1; the sequence is GHVDHGKT. Residue 19-26 coordinates GTP; it reads GHVDHGKT. T26 lines the Mg(2+) pocket. The G2 stretch occupies residues 62 to 66; sequence GITIN. The G3 stretch occupies residues 83 to 86; the sequence is DAPG. GTP is bound by residues 83–87 and 138–141; these read DAPGH and NKAD. The G4 stretch occupies residues 138–141; that stretch reads NKAD. The segment at 175-177 is G5; it reads SAL.

The protein belongs to the TRAFAC class translation factor GTPase superfamily. Classic translation factor GTPase family. EF-Tu/EF-1A subfamily. As to quaternary structure, monomer.

It localises to the cytoplasm. It carries out the reaction GTP + H2O = GDP + phosphate + H(+). GTP hydrolase that promotes the GTP-dependent binding of aminoacyl-tRNA to the A-site of ribosomes during protein biosynthesis. The sequence is that of Elongation factor Tu from Rhodococcus jostii (strain RHA1).